We begin with the raw amino-acid sequence, 169 residues long: Ribosome maturation factor RimP (169 aa).

This sequence belongs to the RimP family.

It is found in the cytoplasm. Functionally, required for maturation of 30S ribosomal subunits. This is Ribosome maturation factor RimP from Koribacter versatilis (strain Ellin345).